The chain runs to 370 residues: Anhydro-N-acetylmuramic acid kinase (370 aa).

An ATP-binding site is contributed by 13–20 (GTSMDGVD).

This sequence belongs to the anhydro-N-acetylmuramic acid kinase family.

It carries out the reaction 1,6-anhydro-N-acetyl-beta-muramate + ATP + H2O = N-acetyl-D-muramate 6-phosphate + ADP + H(+). Its pathway is amino-sugar metabolism; 1,6-anhydro-N-acetylmuramate degradation. It functions in the pathway cell wall biogenesis; peptidoglycan recycling. Functionally, catalyzes the specific phosphorylation of 1,6-anhydro-N-acetylmuramic acid (anhMurNAc) with the simultaneous cleavage of the 1,6-anhydro ring, generating MurNAc-6-P. Is required for the utilization of anhMurNAc either imported from the medium or derived from its own cell wall murein, and thus plays a role in cell wall recycling. The sequence is that of Anhydro-N-acetylmuramic acid kinase from Vibrio vulnificus (strain YJ016).